The sequence spans 376 residues: Chaperone protein DnaJ (376 aa).

The region spanning 5–70 (DYYEVLGVGR…DKKAAYDQFG (66 aa)) is the J domain. Residues 132-210 (GLTKELRIPT…CHGDGRVEKS (79 aa)) form a CR-type zinc finger. Residues Cys145, Cys148, Cys162, Cys165, Cys184, Cys187, Cys198, and Cys201 each coordinate Zn(2+). CXXCXGXG motif repeat units lie at residues 145–152 (CDLCDGSG), 162–169 (CTTCHGQG), 184–191 (CPTCHGRG), and 198–205 (CSKCHGDG).

The protein belongs to the DnaJ family. Homodimer. Requires Zn(2+) as cofactor.

The protein localises to the cytoplasm. Its function is as follows. Participates actively in the response to hyperosmotic and heat shock by preventing the aggregation of stress-denatured proteins and by disaggregating proteins, also in an autonomous, DnaK-independent fashion. Unfolded proteins bind initially to DnaJ; upon interaction with the DnaJ-bound protein, DnaK hydrolyzes its bound ATP, resulting in the formation of a stable complex. GrpE releases ADP from DnaK; ATP binding to DnaK triggers the release of the substrate protein, thus completing the reaction cycle. Several rounds of ATP-dependent interactions between DnaJ, DnaK and GrpE are required for fully efficient folding. Also involved, together with DnaK and GrpE, in the DNA replication of plasmids through activation of initiation proteins. This chain is Chaperone protein DnaJ, found in Shewanella sp. (strain W3-18-1).